A 59-amino-acid chain; its full sequence is Large ribosomal subunit protein bL32 (59 aa).

A disordered region spans residues 1–20; sequence MAVQKNKPTRSKRGMRRSHD. The segment covering 7–19 has biased composition (basic residues); it reads KPTRSKRGMRRSH.

This sequence belongs to the bacterial ribosomal protein bL32 family.

In Wigglesworthia glossinidia brevipalpis, this protein is Large ribosomal subunit protein bL32.